An 83-amino-acid chain; its full sequence is Bowman-Birk type proteinase inhibitor C-II (83 aa).

A propeptide spanning residues 1 to 7 (MELNLFK) is cleaved from the precursor. Cystine bridges form between Cys-21–Cys-75, Cys-22–Cys-37, Cys-25–Cys-71, Cys-27–Cys-35, Cys-45–Cys-52, Cys-49–Cys-64, and Cys-54–Cys-62.

Belongs to the Bowman-Birk serine protease inhibitor family.

The polypeptide is Bowman-Birk type proteinase inhibitor C-II (Glycine max (Soybean)).